Reading from the N-terminus, the 80-residue chain is Conotoxin VnMSGL-0121 (80 aa).

Residues 1–20 form the signal peptide; sequence MSGLGIMVLTLLLLVSMATS. Residues 21–44 constitute a propeptide that is removed on maturation; the sequence is HQDGGGKQATQRDAINVRRRRSIT. 3 disulfides stabilise this stretch: C52/C65, C56/C74, and C64/C78. Phenylalanine amide is present on F79.

The protein belongs to the conotoxin O3 superfamily. In terms of tissue distribution, expressed by the venom duct.

The protein localises to the secreted. In Conus ventricosus (Mediterranean cone), this protein is Conotoxin VnMSGL-0121.